A 273-amino-acid polypeptide reads, in one-letter code: 2,3,4,5-tetrahydropyridine-2,6-dicarboxylate N-succinyltransferase (273 aa).

The substrate site is built by Arg-104 and Asp-141.

It belongs to the transferase hexapeptide repeat family. In terms of assembly, homotrimer.

The protein resides in the cytoplasm. It catalyses the reaction (S)-2,3,4,5-tetrahydrodipicolinate + succinyl-CoA + H2O = (S)-2-succinylamino-6-oxoheptanedioate + CoA. The protein operates within amino-acid biosynthesis; L-lysine biosynthesis via DAP pathway; LL-2,6-diaminopimelate from (S)-tetrahydrodipicolinate (succinylase route): step 1/3. The polypeptide is 2,3,4,5-tetrahydropyridine-2,6-dicarboxylate N-succinyltransferase (Neisseria meningitidis serogroup B (strain ATCC BAA-335 / MC58)).